A 460-amino-acid polypeptide reads, in one-letter code: MPSCTASTMPGMICKNPDLEFDSLQPCFYPDEDDFYFGGPDSTPPGEDIWKKFELLPTPPLSPSRAFSEQSPEPSDWATEMLLPEADLWGNPAEEDAFGLGGLGGLTPNPVILQDCMWSGFSAREKLERAVSEKLQHGRGPPAAGPATPGAGAANPAGRGHGGTAGAGRAGAALPAELAHPAAECVDPAVVFPFPVNKRDPAPVPVAPAGSPAVGAAVAGAAAPASAAVAAPPRLGGRPANGGDHKALSTSGEDTLSDSDDEDDEEEDEEEEIDVVTVEKRRSSSNSKAVTTFTITVRPKNAALGLGRAQSSELILKRCVPIHQQHNYAAPSPYVESEDAPPQKKIKSEVSPRPLKSVIPPKAKSLSPRNSDSEDSERRRNHNILERQRRNDLRSSFLTLRDHVPELVKNEKAAKVVILKKATEYVHSLQAEEHQLLLEKEKLQARQQQLLKKIELARTC.

An interaction with AURKA region spans residues 19 to 47 (LEFDSLQPCFYPDEDDFYFGGPDSTPPGE). An interaction with AURKA and FBXW7 region spans residues 61-90 (LSPSRAFSEQSPEPSDWATEMLLPEADLWG). Positions 76-85 (DWATEMLLPE) match the 9aaTAD motif. Disordered stretches follow at residues 131–169 (VSEK…GAGR), 221–288 (AAAP…SNSK), and 330–388 (APSP…LERQ). Residues 138 to 158 (GRGPPAAGPATPGAGAANPAG) are compositionally biased toward low complexity. Positions 159 to 169 (RGHGGTAGAGR) are enriched in gly residues. Low complexity predominate over residues 221–233 (AAAPASAAVAAPP). The span at 255–274 (TLSDSDDEDDEEEDEEEEID) shows a compositional bias: acidic residues. Phosphoserine; by CK2 occurs at positions 257 and 259. Positions 377–429 (ERRRNHNILERQRRNDLRSSFLTLRDHVPELVKNEKAAKVVILKKATEYVHSL) constitute a bHLH domain. Residues 429-450 (LQAEEHQLLLEKEKLQARQQQL) form a leucine-zipper region.

In terms of assembly, efficient DNA binding requires dimerization with another bHLH protein. Binds DNA as a heterodimer with MAX. Interacts with KDM5A, KDM5B and HUWE1. Interacts with MYCNOS. Interacts with AURKA; interaction is phospho-independent and triggers AURKA activation; AURKA competes with FBXW7 for binding to unphosphorylated MYCN but not for binding to unphosphorylated MYCN. Interacts with FBXW7; FBXW7 competes with AURKA for binding to unphosphorylated MYCN but not for binding to phosphorylated MYCN. Phosphorylated by GSK3-beta which may promote its degradation. Phosphorylated by AURKA.

It is found in the nucleus. In terms of biological role, positively regulates the transcription of MYCNOS in neuroblastoma cells. The protein is N-myc proto-oncogene protein (MYCN) of Marmota monax (Woodchuck).